A 510-amino-acid polypeptide reads, in one-letter code: Maturase K (510 aa).

It belongs to the intron maturase 2 family. MatK subfamily.

Its subcellular location is the plastid. In terms of biological role, usually encoded in the trnK tRNA gene intron. Probably assists in splicing its own and other chloroplast group II introns. The sequence is that of Maturase K from Aneura mirabilis (Parasitic liverwort).